The chain runs to 198 residues: Recombination protein RecR (198 aa).

The C4-type zinc-finger motif lies at 57–72 (CSSCGHITDKDPCYIC). Residues 80–175 (SIICVVQDPK…KITRIAHGLP (96 aa)) enclose the Toprim domain.

The protein belongs to the RecR family.

In terms of biological role, may play a role in DNA repair. It seems to be involved in an RecBC-independent recombinational process of DNA repair. It may act with RecF and RecO. This is Recombination protein RecR from Anoxybacillus flavithermus (strain DSM 21510 / WK1).